A 298-amino-acid chain; its full sequence is Mitochondrial substrate carrier family protein N (298 aa).

Over 1-13 (MAGDLTPSLFLKY) the chain is Mitochondrial intermembrane. 3 Solcar repeats span residues 8–92 (SLFL…FKKT), 104–188 (FRIP…TAEN), and 207–290 (QKLS…IKQM). The chain crosses the membrane as a helical span at residues 14–34 (GFGGALSCSITHSLVVPLDVV). Residues 35–60 (KTLLQTNPGKYTGMMNGFSTVIKEQG) are Mitochondrial matrix-facing. Residues 61–81 (PSGLLQGLGPTAVGYALQGFL) traverse the membrane as a helical segment. Over 82-105 (KFGFYEVFKKTYADAVGEKADQFR) the chain is Mitochondrial intermembrane. The helical transmembrane segment at 106–126 (IPIWLAASATAEVIADIALCP) threads the bilayer. Over 127 to 162 (NEAVRIRLVAEPTFAKSPVEAFGKIFKQEGVLGFYK) the chain is Mitochondrial matrix. A helical membrane pass occupies residues 163-179 (GLPPILLKQVPYTMAKF). Over 180 to 208 (AVFEFTAENVYKGLAASGKPKESLTDGQK) the chain is Mitochondrial intermembrane. The chain crosses the membrane as a helical span at residues 209–229 (LSVSLGSGIVAGIVAAIVSQP). Residues 230 to 262 (ADTILSKINQEKTDGGVVKAIGNIMRRLGVRGL) lie on the Mitochondrial matrix side of the membrane. A helical transmembrane segment spans residues 263 to 283 (FLGLPTRCFMVGTLTAGQFFI). Over 284-298 (YDGIKQMLGLTPAKK) the chain is Mitochondrial intermembrane.

It belongs to the mitochondrial carrier (TC 2.A.29) family.

Its subcellular location is the mitochondrion inner membrane. Functionally, mitochondrial solute carriers shuttle metabolites, nucleotides, and cofactors through the mitochondrial inner membrane. Transports phosphate groups from the cytosol to the mitochondrial matrix. Phosphate is cotransported with H(+). The sequence is that of Mitochondrial substrate carrier family protein N (mcfN) from Dictyostelium discoideum (Social amoeba).